The primary structure comprises 484 residues: Poly(A) RNA polymerase GLD2 (484 aa).

Ser-62 and Ser-69 each carry phosphoserine. Positions 76 to 92 (KRISDEKAFRLDGKRQR) match the Nuclear localization signal motif. Ser-95 carries the post-translational modification Phosphoserine. Residues Asp-213 and Asp-215 each contribute to the Mg(2+) site. The 55-residue stretch at 386–440 (SLGDLLLGFLKYYATEFDWNTQMISVREAKAIPRPDDMEWRNKYICVEEPFDGTN) folds into the PAP-associated domain.

Belongs to the DNA polymerase type-B-like family. GLD2 subfamily. Interacts with CPEB1, CPEB2, CPSF1 and PABPC1. Interacts with QKI isoform QKI7; promoting recruitment to miRNA miR-122 and miR-122 stabilization. Requires Mg(2+) as cofactor. Mn(2+) is required as a cofactor.

The protein resides in the cytoplasm. It is found in the nucleus. The catalysed reaction is RNA(n) + ATP = RNA(n)-3'-adenine ribonucleotide + diphosphate. Functionally, cytoplasmic poly(A) RNA polymerase that adds successive AMP monomers to the 3'-end of specific RNAs, forming a poly(A) tail. In contrast to the canonical nuclear poly(A) RNA polymerase, it only adds poly(A) to selected cytoplasmic mRNAs. Does not play a role in replication-dependent histone mRNA degradation. Adds a single nucleotide to the 3' end of specific miRNAs, monoadenylation stabilizes and prolongs the activity of some but not all miRNAs. The chain is Poly(A) RNA polymerase GLD2 from Rattus norvegicus (Rat).